We begin with the raw amino-acid sequence, 160 residues long: 2-C-methyl-D-erythritol 2,4-cyclodiphosphate synthase (160 aa).

A divalent metal cation is bound by residues Asp9 and His11. Residues 9–11 and 35–36 each bind 4-CDP-2-C-methyl-D-erythritol 2-phosphate; these read DVH and HS. His43 lines the a divalent metal cation pocket. 4-CDP-2-C-methyl-D-erythritol 2-phosphate is bound by residues 57–59, 62–66, 101–107, 133–136, Phe140, and Arg143; these read DIG, FPDTD, AEAPKMA, and TTSE.

The protein belongs to the IspF family. As to quaternary structure, homotrimer. A divalent metal cation serves as cofactor.

The enzyme catalyses 4-CDP-2-C-methyl-D-erythritol 2-phosphate = 2-C-methyl-D-erythritol 2,4-cyclic diphosphate + CMP. It participates in isoprenoid biosynthesis; isopentenyl diphosphate biosynthesis via DXP pathway; isopentenyl diphosphate from 1-deoxy-D-xylulose 5-phosphate: step 4/6. Its function is as follows. Involved in the biosynthesis of isopentenyl diphosphate (IPP) and dimethylallyl diphosphate (DMAPP), two major building blocks of isoprenoid compounds. Catalyzes the conversion of 4-diphosphocytidyl-2-C-methyl-D-erythritol 2-phosphate (CDP-ME2P) to 2-C-methyl-D-erythritol 2,4-cyclodiphosphate (ME-CPP) with a corresponding release of cytidine 5-monophosphate (CMP). In Methylobacillus flagellatus (strain ATCC 51484 / DSM 6875 / VKM B-1610 / KT), this protein is 2-C-methyl-D-erythritol 2,4-cyclodiphosphate synthase.